A 355-amino-acid chain; its full sequence is 3,4-dihydroxy-2-butanone 4-phosphate synthase (355 aa).

Residues 1–202 (MYHKRIKEAI…VSDIIQYRLN (202 aa)) are DHBP synthase. Residues 27–28 (RE), aspartate 32, 139–143 (RTGHT), and glutamate 163 contribute to the D-ribulose 5-phosphate site. Glutamate 28 provides a ligand contact to Mg(2+). Residue histidine 142 participates in Mg(2+) binding. The GTP cyclohydrolase II-like stretch occupies residues 203–355 (FENLLREITR…NLHLVEKIEV (153 aa)).

This sequence in the N-terminal section; belongs to the DHBP synthase family. In the C-terminal section; belongs to the GTP cyclohydrolase II family. The cofactor is Mg(2+). It depends on Mn(2+) as a cofactor.

The catalysed reaction is D-ribulose 5-phosphate = (2S)-2-hydroxy-3-oxobutyl phosphate + formate + H(+). The protein operates within cofactor biosynthesis; riboflavin biosynthesis; 2-hydroxy-3-oxobutyl phosphate from D-ribulose 5-phosphate: step 1/1. Catalyzes the conversion of D-ribulose 5-phosphate to formate and 3,4-dihydroxy-2-butanone 4-phosphate. The chain is 3,4-dihydroxy-2-butanone 4-phosphate synthase (ribB) from Helicobacter hepaticus (strain ATCC 51449 / 3B1).